The following is a 271-amino-acid chain: Magnetosome protein MamX (271 aa).

At Met-1–Asn-10 the chain is on the cytoplasmic side. A helical membrane pass occupies residues Ile-11–Val-31. Topologically, residues Phe-32–Arg-271 are lumenal. The MCR (magnetochrome) 1 signature appears at Ile-48–Val-71. 6 residues coordinate heme: Cys-65, Cys-68, His-69, Cys-104, Cys-107, and His-108. Residues Ile-87–Ile-110 carry the MCR 2 motif.

Belongs to the magnetosome MamX family. Heme is required as a cofactor.

The protein localises to the magnetosome membrane. Its function is as follows. Required for correct biomineralization of the magnetosome, may be involved in redox control of biomineralization. May function with MamY, MamZ amd Mms6. The protein is Magnetosome protein MamX (mamX) of Paramagnetospirillum magneticum (strain ATCC 700264 / AMB-1) (Magnetospirillum magneticum).